Here is a 90-residue protein sequence, read N- to C-terminus: Elongation factor 1-beta (90 aa).

Belongs to the EF-1-beta/EF-1-delta family.

Promotes the exchange of GDP for GTP in EF-1-alpha/GDP, thus allowing the regeneration of EF-1-alpha/GTP that could then be used to form the ternary complex EF-1-alpha/GTP/AAtRNA. The sequence is that of Elongation factor 1-beta from Desulfurococcus amylolyticus (strain DSM 18924 / JCM 16383 / VKM B-2413 / 1221n) (Desulfurococcus kamchatkensis).